The chain runs to 159 residues: Ribosomal RNA large subunit methyltransferase H (159 aa).

S-adenosyl-L-methionine-binding positions include Leu-76, Gly-108, and 127-132; that span reads FGQLTL.

It belongs to the RNA methyltransferase RlmH family. Homodimer.

It is found in the cytoplasm. The catalysed reaction is pseudouridine(1915) in 23S rRNA + S-adenosyl-L-methionine = N(3)-methylpseudouridine(1915) in 23S rRNA + S-adenosyl-L-homocysteine + H(+). Specifically methylates the pseudouridine at position 1915 (m3Psi1915) in 23S rRNA. The sequence is that of Ribosomal RNA large subunit methyltransferase H from Streptococcus gordonii (strain Challis / ATCC 35105 / BCRC 15272 / CH1 / DL1 / V288).